We begin with the raw amino-acid sequence, 532 residues long: tRNA-2-methylthio-N(6)-dimethylallyladenosine synthase 2 (532 aa).

The interval methionine 1 to methionine 21 is disordered. The region spanning arginine 24–histidine 140 is the MTTase N-terminal domain. Positions 33, 69, 103, 177, 181, and 184 each coordinate [4Fe-4S] cluster. The 237-residue stretch at arginine 163 to glutamate 399 folds into the Radical SAM core domain. The TRAM domain maps to arginine 402–isoleucine 470. Residues threonine 510–glutamine 532 are disordered. Low complexity predominate over residues glycine 523–glutamine 532.

Belongs to the methylthiotransferase family. MiaB subfamily. In terms of assembly, monomer. [4Fe-4S] cluster is required as a cofactor.

The protein resides in the cytoplasm. It carries out the reaction N(6)-dimethylallyladenosine(37) in tRNA + (sulfur carrier)-SH + AH2 + 2 S-adenosyl-L-methionine = 2-methylsulfanyl-N(6)-dimethylallyladenosine(37) in tRNA + (sulfur carrier)-H + 5'-deoxyadenosine + L-methionine + A + S-adenosyl-L-homocysteine + 2 H(+). Catalyzes the methylthiolation of N6-(dimethylallyl)adenosine (i(6)A), leading to the formation of 2-methylthio-N6-(dimethylallyl)adenosine (ms(2)i(6)A) at position 37 in tRNAs that read codons beginning with uridine. The protein is tRNA-2-methylthio-N(6)-dimethylallyladenosine synthase 2 of Mycobacterium marinum (strain ATCC BAA-535 / M).